We begin with the raw amino-acid sequence, 301 residues long: Lipoyl synthase (301 aa).

Residues cysteine 53, cysteine 58, cysteine 64, cysteine 79, cysteine 83, cysteine 86, and serine 290 each coordinate [4Fe-4S] cluster. The Radical SAM core domain maps to 65–279 (WSRKTATYML…RIYGKSIGFK (215 aa)).

The protein belongs to the radical SAM superfamily. Lipoyl synthase family. Requires [4Fe-4S] cluster as cofactor.

It is found in the cytoplasm. It catalyses the reaction [[Fe-S] cluster scaffold protein carrying a second [4Fe-4S](2+) cluster] + N(6)-octanoyl-L-lysyl-[protein] + 2 oxidized [2Fe-2S]-[ferredoxin] + 2 S-adenosyl-L-methionine + 4 H(+) = [[Fe-S] cluster scaffold protein] + N(6)-[(R)-dihydrolipoyl]-L-lysyl-[protein] + 4 Fe(3+) + 2 hydrogen sulfide + 2 5'-deoxyadenosine + 2 L-methionine + 2 reduced [2Fe-2S]-[ferredoxin]. It functions in the pathway protein modification; protein lipoylation via endogenous pathway; protein N(6)-(lipoyl)lysine from octanoyl-[acyl-carrier-protein]: step 2/2. Its function is as follows. Catalyzes the radical-mediated insertion of two sulfur atoms into the C-6 and C-8 positions of the octanoyl moiety bound to the lipoyl domains of lipoate-dependent enzymes, thereby converting the octanoylated domains into lipoylated derivatives. The sequence is that of Lipoyl synthase from Leptospira interrogans serogroup Icterohaemorrhagiae serovar Lai (strain 56601).